The following is an 84-amino-acid chain: MATGTDQAVGFGLVAVSLIIFTYYTTWVILLPFIDSQHVIHKYFLPRAYAVLLPLAAGLLLLLFVGLFITYVLLKSQKVTKKAQ.

2 helical membrane-spanning segments follow: residues 11–31 and 49–69; these read FGLV…VILL and YAVL…GLFI.

This sequence belongs to the DPM2 family. In terms of assembly, component of the dolichol-phosphate mannose (DPM) synthase complex composed of DPM1, DPM2 and DPM3; in the complex interacts directly with DPM3. Component of the glycosylphosphatidylinositol-N-acetylglucosaminyltransferase (GPI-GnT) complex composed at least by PIGA, PIGC, PIGH, PIGP, PIGQ, PIGY and DPM2. Interacts with PIGA, PIGC and PIGQ.

It is found in the endoplasmic reticulum membrane. Its pathway is protein modification; protein glycosylation. Regulates the biosynthesis of dolichol phosphate-mannose. Regulatory subunit of the dolichol-phosphate mannose (DPM) synthase complex; essential for the ER localization and stable expression of DPM1. Part of the glycosylphosphatidylinositol-N-acetylglucosaminyltransferase (GPI-GnT) complex that catalyzes the transfer of N-acetylglucosamine from UDP-N-acetylglucosamine to phosphatidylinositol and participates in the first step of GPI biosynthesis. May act by regulating the GPI-GNT complex. The sequence is that of Dolichol phosphate-mannose biosynthesis regulatory protein from Rattus norvegicus (Rat).